Reading from the N-terminus, the 133-residue chain is Histone H2A (133 aa).

The span at 1–10 shows a compositional bias: gly residues; it reads MTGGKSGGKA. Residues 1–25 are disordered; it reads MTGGKSGGKASGSKSSQSRSSKAGL. An N6-acetyllysine mark is found at K5 and K9. The segment covering 11–24 has biased composition (low complexity); it reads SGSKSSQSRSSKAG. Q106 is modified (N5-methylglutamine). S130 is modified (phosphoserine). Residues 130–131 carry the [ST]-Q motif motif; sequence SQ.

It belongs to the histone H2A family. In terms of assembly, the nucleosome is a histone octamer containing two molecules each of H2A, H2B, H3 and H4 assembled in one H3-H4 heterotetramer and two H2A-H2B heterodimers. The octamer wraps approximately 147 bp of DNA. Post-translationally, phosphorylated to form H2AS128ph (gamma-H2A) in response to DNA double-strand breaks (DSBs) generated by exogenous genotoxic agents and by stalled replication forks. Phosphorylation is dependent on the DNA damage checkpoint kinases MEC1/ATR and TEL1/ATM, spreads on either side of a detected DSB site and may mark the surrounding chromatin for recruitment of proteins required for DNA damage signaling and repair. Gamma-H2A is removed from the DNA prior to the strand invasion-primer extension step of the repair process and subsequently dephosphorylated. Dephosphorylation is necessary for efficient recovery from the DNA damage checkpoint. Acetylated by ESA1 to form H2AK4ac and H2AK7ac.

It localises to the nucleus. Its subcellular location is the chromosome. Functionally, core component of nucleosome which plays a central role in DNA double strand break (DSB) repair. Nucleosomes wrap and compact DNA into chromatin, limiting DNA accessibility to the cellular machineries which require DNA as a template. Histones thereby play a central role in transcription regulation, DNA repair, DNA replication and chromosomal stability. DNA accessibility is regulated via a complex set of post-translational modifications of histones, also called histone code, and nucleosome remodeling. This Coccidioides immitis (strain RS) (Valley fever fungus) protein is Histone H2A (HTA1).